Here is a 950-residue protein sequence, read N- to C-terminus: Leucine--tRNA ligase (950 aa).

The short motif at P42 to H52 is the 'HIGH' region element. The short motif at K629–S633 is the 'KMSKS' region element. Residue K632 coordinates ATP. Positions N928–E950 are disordered.

The protein belongs to the class-I aminoacyl-tRNA synthetase family.

The protein resides in the cytoplasm. The enzyme catalyses tRNA(Leu) + L-leucine + ATP = L-leucyl-tRNA(Leu) + AMP + diphosphate. This is Leucine--tRNA ligase from Methanothrix thermoacetophila (strain DSM 6194 / JCM 14653 / NBRC 101360 / PT) (Methanosaeta thermophila).